Consider the following 150-residue polypeptide: Deoxyuridine 5'-triphosphate nucleotidohydrolase (150 aa).

Residues 69-71 (RSG), Asn82, 86-88 (LID), and Lys96 contribute to the substrate site.

Belongs to the dUTPase family. Mg(2+) is required as a cofactor.

It carries out the reaction dUTP + H2O = dUMP + diphosphate + H(+). Its pathway is pyrimidine metabolism; dUMP biosynthesis; dUMP from dCTP (dUTP route): step 2/2. Its function is as follows. This enzyme is involved in nucleotide metabolism: it produces dUMP, the immediate precursor of thymidine nucleotides and it decreases the intracellular concentration of dUTP so that uracil cannot be incorporated into DNA. In Neisseria gonorrhoeae (strain NCCP11945), this protein is Deoxyuridine 5'-triphosphate nucleotidohydrolase.